Here is a 68-residue protein sequence, read N- to C-terminus: Large ribosomal subunit protein uL29 (68 aa).

This sequence belongs to the universal ribosomal protein uL29 family.

The sequence is that of Large ribosomal subunit protein uL29 from Picosynechococcus sp. (strain ATCC 27264 / PCC 7002 / PR-6) (Agmenellum quadruplicatum).